The primary structure comprises 160 residues: 6,7-dimethyl-8-ribityllumazine synthase (160 aa).

5-amino-6-(D-ribitylamino)uracil-binding positions include phenylalanine 32, 66–68 (ALE), and 90–92 (CII). 95 to 96 (ET) is a binding site for (2S)-2-hydroxy-3-oxobutyl phosphate. Catalysis depends on histidine 98, which acts as the Proton donor. Asparagine 123 provides a ligand contact to 5-amino-6-(D-ribitylamino)uracil. Arginine 137 serves as a coordination point for (2S)-2-hydroxy-3-oxobutyl phosphate.

This sequence belongs to the DMRL synthase family.

It carries out the reaction (2S)-2-hydroxy-3-oxobutyl phosphate + 5-amino-6-(D-ribitylamino)uracil = 6,7-dimethyl-8-(1-D-ribityl)lumazine + phosphate + 2 H2O + H(+). The protein operates within cofactor biosynthesis; riboflavin biosynthesis; riboflavin from 2-hydroxy-3-oxobutyl phosphate and 5-amino-6-(D-ribitylamino)uracil: step 1/2. Catalyzes the formation of 6,7-dimethyl-8-ribityllumazine by condensation of 5-amino-6-(D-ribitylamino)uracil with 3,4-dihydroxy-2-butanone 4-phosphate. This is the penultimate step in the biosynthesis of riboflavin. The chain is 6,7-dimethyl-8-ribityllumazine synthase from Methylibium petroleiphilum (strain ATCC BAA-1232 / LMG 22953 / PM1).